Reading from the N-terminus, the 928-residue chain is MORC family CW-type zinc finger protein 4 (928 aa).

The segment at 417–469 (RIPDQTWVQCDECLKWRRLPGMVDPSTLPARWFCYYNPHPKFKRCSVPEEQER) adopts a CW-type zinc-finger fold. Positions 426, 429, 450, and 461 each coordinate Zn(2+). Disordered regions lie at residues 474–510 (LHRSKAKQQVEAAEKKQKPMESDKYQVFSNPPKTPPL), 527–546 (NSPSLLPSVREESRSPPRLK), 599–649 (AYPE…DQDQ), and 718–766 (RAES…LKRT). Over residues 485–497 (AAEKKQKPMESDK) the composition is skewed to basic and acidic residues. Composition is skewed to basic and acidic residues over residues 626–636 (ESNKHTEENRE), 739–748 (KGKDCQDSRS), and 756–766 (TPKESEELKRT). Positions 758–867 (KESEELKRTT…LEVLQKAQVS (110 aa)) form a coiled coil.

Its subcellular location is the nucleus. Its function is as follows. Histone methylation reader which binds to non-methylated (H3K4me0), monomethylated (H3K4me1), dimethylated (H3K4me2) and trimethylated (H3K4me3) 'Lys-4' on histone H3. The order of binding preference is H3K4me3 &gt; H3K4me2 &gt; H3K4me1 &gt; H3K4me0. The sequence is that of MORC family CW-type zinc finger protein 4 (Morc4) from Mus musculus (Mouse).